The chain runs to 119 residues: DNA-binding protein inhibitor ID-3 (119 aa).

Residues 28-80 (RGKSPAAEEPLSLLDDMNHCYSRLRELVPGVPRGTQLSQVEILQRVIDYILDL) form the bHLH domain.

Homodimer, and heterodimer with other HLH proteins. Interacts with COPS5 and COPS7A. Interacts with IFI204. Interacts with GATA4 and NKX2-5. Interacts with ANKRD2; both proteins cooperate in myoblast differentiation. Interacts with CLOCK and BMAL1.

Its subcellular location is the nucleus. Transcriptional regulator (lacking a basic DNA binding domain) which negatively regulates the basic helix-loop-helix (bHLH) transcription factors by forming heterodimers and inhibiting their DNA binding and transcriptional activity. Implicated in regulating a variety of cellular processes, including cellular growth, senescence, differentiation, apoptosis, angiogenesis, and neoplastic transformation. Involved in myogenesis by inhibiting skeletal muscle and cardiac myocyte differentiation and promoting muscle precursor cells proliferation. Inhibits the binding of E2A-containing protein complexes to muscle creatine kinase E-box enhancer. Regulates the circadian clock by repressing the transcriptional activator activity of the CLOCK-BMAL1 heterodimer. The chain is DNA-binding protein inhibitor ID-3 (ID3) from Bos taurus (Bovine).